The primary structure comprises 123 residues: Loki profilin-3 (123 aa).

Belongs to the Asgard profilin family.

It is found in the cytoplasm. The protein localises to the cytoskeleton. Its function is as follows. Binds to actin and affects the structure of the cytoskeleton. At high concentrations inhibits spontaneous rabbit actin nucleation. This strongly suggests this archaea has a profilin-regulated actin system, and actin-type genes can be identified in this organism. In Lokiarchaeum sp. (strain GC14_75), this protein is Loki profilin-3.